An 83-amino-acid polypeptide reads, in one-letter code: Translational regulator CsrA (83 aa).

The protein belongs to the CsrA/RsmA family. Homodimer; the beta-strands of each monomer intercalate to form a hydrophobic core, while the alpha-helices form wings that extend away from the core.

It localises to the cytoplasm. In terms of biological role, a translational regulator that binds mRNA to regulate translation initiation and/or mRNA stability. Usually binds in the 5'-UTR at or near the Shine-Dalgarno sequence preventing ribosome-binding, thus repressing translation. Its main target seems to be the major flagellin gene, while its function is anatagonized by FliW. This chain is Translational regulator CsrA, found in Nocardioides sp. (strain ATCC BAA-499 / JS614).